The sequence spans 131 residues: Aspartate 1-decarboxylase (131 aa).

S25 acts as the Schiff-base intermediate with substrate; via pyruvic acid in catalysis. S25 carries the pyruvic acid (Ser) modification. T57 lines the substrate pocket. Y58 serves as the catalytic Proton donor. Position 73 to 75 (73 to 75 (GAA)) interacts with substrate.

It belongs to the PanD family. Heterooctamer of four alpha and four beta subunits. It depends on pyruvate as a cofactor. In terms of processing, is synthesized initially as an inactive proenzyme, which is activated by self-cleavage at a specific serine bond to produce a beta-subunit with a hydroxyl group at its C-terminus and an alpha-subunit with a pyruvoyl group at its N-terminus.

It localises to the cytoplasm. It catalyses the reaction L-aspartate + H(+) = beta-alanine + CO2. It participates in cofactor biosynthesis; (R)-pantothenate biosynthesis; beta-alanine from L-aspartate: step 1/1. Functionally, catalyzes the pyruvoyl-dependent decarboxylation of aspartate to produce beta-alanine. The sequence is that of Aspartate 1-decarboxylase from Chlorobium phaeobacteroides (strain DSM 266 / SMG 266 / 2430).